The primary structure comprises 284 residues: Bifunctional protein FolD (284 aa).

Residues 166–168 (GAS) and Ile232 each bind NADP(+).

This sequence belongs to the tetrahydrofolate dehydrogenase/cyclohydrolase family. In terms of assembly, homodimer.

The catalysed reaction is (6R)-5,10-methylene-5,6,7,8-tetrahydrofolate + NADP(+) = (6R)-5,10-methenyltetrahydrofolate + NADPH. It carries out the reaction (6R)-5,10-methenyltetrahydrofolate + H2O = (6R)-10-formyltetrahydrofolate + H(+). It functions in the pathway one-carbon metabolism; tetrahydrofolate interconversion. In terms of biological role, catalyzes the oxidation of 5,10-methylenetetrahydrofolate to 5,10-methenyltetrahydrofolate and then the hydrolysis of 5,10-methenyltetrahydrofolate to 10-formyltetrahydrofolate. The polypeptide is Bifunctional protein FolD (Shewanella amazonensis (strain ATCC BAA-1098 / SB2B)).